The primary structure comprises 384 residues: N-acetyldiaminopimelate deacetylase (384 aa).

Residue aspartate 75 is part of the active site. Residue glutamate 134 is the Proton acceptor of the active site.

The protein belongs to the peptidase M20A family. N-acetyldiaminopimelate deacetylase subfamily.

It catalyses the reaction N-acetyl-(2S,6S)-2,6-diaminopimelate + H2O = (2S,6S)-2,6-diaminopimelate + acetate. It participates in amino-acid biosynthesis; L-lysine biosynthesis via DAP pathway; LL-2,6-diaminopimelate from (S)-tetrahydrodipicolinate (acetylase route): step 3/3. Catalyzes the conversion of N-acetyl-diaminopimelate to diaminopimelate and acetate. The protein is N-acetyldiaminopimelate deacetylase of Lactobacillus helveticus (strain DPC 4571).